Reading from the N-terminus, the 205-residue chain is Imidazole glycerol phosphate synthase subunit HisH (205 aa).

Positions 1–205 (MIALVDYGGG…FFKMALGDKK (205 aa)) constitute a Glutamine amidotransferase type-1 domain. Cys79 (nucleophile) is an active-site residue. Catalysis depends on residues His181 and Glu183.

As to quaternary structure, heterodimer of HisH and HisF.

The protein localises to the cytoplasm. It catalyses the reaction 5-[(5-phospho-1-deoxy-D-ribulos-1-ylimino)methylamino]-1-(5-phospho-beta-D-ribosyl)imidazole-4-carboxamide + L-glutamine = D-erythro-1-(imidazol-4-yl)glycerol 3-phosphate + 5-amino-1-(5-phospho-beta-D-ribosyl)imidazole-4-carboxamide + L-glutamate + H(+). The catalysed reaction is L-glutamine + H2O = L-glutamate + NH4(+). Its pathway is amino-acid biosynthesis; L-histidine biosynthesis; L-histidine from 5-phospho-alpha-D-ribose 1-diphosphate: step 5/9. In terms of biological role, IGPS catalyzes the conversion of PRFAR and glutamine to IGP, AICAR and glutamate. The HisH subunit catalyzes the hydrolysis of glutamine to glutamate and ammonia as part of the synthesis of IGP and AICAR. The resulting ammonia molecule is channeled to the active site of HisF. This Dehalococcoides mccartyi (strain ATCC BAA-2266 / KCTC 15142 / 195) (Dehalococcoides ethenogenes (strain 195)) protein is Imidazole glycerol phosphate synthase subunit HisH.